A 93-amino-acid polypeptide reads, in one-letter code: Pyrimidine/purine nucleoside phosphorylase (93 aa).

This sequence belongs to the nucleoside phosphorylase PpnP family.

The enzyme catalyses a purine D-ribonucleoside + phosphate = a purine nucleobase + alpha-D-ribose 1-phosphate. It catalyses the reaction adenosine + phosphate = alpha-D-ribose 1-phosphate + adenine. The catalysed reaction is cytidine + phosphate = cytosine + alpha-D-ribose 1-phosphate. It carries out the reaction guanosine + phosphate = alpha-D-ribose 1-phosphate + guanine. The enzyme catalyses inosine + phosphate = alpha-D-ribose 1-phosphate + hypoxanthine. It catalyses the reaction thymidine + phosphate = 2-deoxy-alpha-D-ribose 1-phosphate + thymine. The catalysed reaction is uridine + phosphate = alpha-D-ribose 1-phosphate + uracil. It carries out the reaction xanthosine + phosphate = alpha-D-ribose 1-phosphate + xanthine. Its function is as follows. Catalyzes the phosphorolysis of diverse nucleosides, yielding D-ribose 1-phosphate and the respective free bases. Can use uridine, adenosine, guanosine, cytidine, thymidine, inosine and xanthosine as substrates. Also catalyzes the reverse reactions. This Hahella chejuensis (strain KCTC 2396) protein is Pyrimidine/purine nucleoside phosphorylase.